Here is a 328-residue protein sequence, read N- to C-terminus: Cytochrome f (328 aa).

An N-terminal signal peptide occupies residues 1 to 44; the sequence is MRNPDTLGLWTKTMVALRRFTVLAIATVSVFLITDLGLPQAASA. Tyrosine 45, cysteine 66, cysteine 69, and histidine 70 together coordinate heme. Residues 296–313 form a helical membrane-spanning segment; that stretch reads FLVLFLAGIMLSQILLVL.

The protein belongs to the cytochrome f family. The 4 large subunits of the cytochrome b6-f complex are cytochrome b6, subunit IV (17 kDa polypeptide, PetD), cytochrome f and the Rieske protein, while the 4 small subunits are PetG, PetL, PetM and PetN. The complex functions as a dimer. Requires heme as cofactor.

It localises to the cellular thylakoid membrane. Its function is as follows. Component of the cytochrome b6-f complex, which mediates electron transfer between photosystem II (PSII) and photosystem I (PSI), cyclic electron flow around PSI, and state transitions. The protein is Cytochrome f (petA) of Synechocystis sp. (strain ATCC 27184 / PCC 6803 / Kazusa).